We begin with the raw amino-acid sequence, 83 residues long: Small ribosomal subunit protein bS16 (83 aa).

Belongs to the bacterial ribosomal protein bS16 family.

This Pseudomonas fluorescens (strain Pf0-1) protein is Small ribosomal subunit protein bS16.